Consider the following 290-residue polypeptide: 4-hydroxy-tetrahydrodipicolinate synthase (290 aa).

Pyruvate is bound at residue T45. Catalysis depends on Y133, which acts as the Proton donor/acceptor. K161 (schiff-base intermediate with substrate) is an active-site residue. Position 203 (I203) interacts with pyruvate.

Belongs to the DapA family. Homotetramer; dimer of dimers.

Its subcellular location is the cytoplasm. It carries out the reaction L-aspartate 4-semialdehyde + pyruvate = (2S,4S)-4-hydroxy-2,3,4,5-tetrahydrodipicolinate + H2O + H(+). It participates in amino-acid biosynthesis; L-lysine biosynthesis via DAP pathway; (S)-tetrahydrodipicolinate from L-aspartate: step 3/4. Catalyzes the condensation of (S)-aspartate-beta-semialdehyde [(S)-ASA] and pyruvate to 4-hydroxy-tetrahydrodipicolinate (HTPA). This is 4-hydroxy-tetrahydrodipicolinate synthase from Cellvibrio japonicus (strain Ueda107) (Pseudomonas fluorescens subsp. cellulosa).